The sequence spans 298 residues: Keratin-associated protein 10-11 (298 aa).

Repeat copies occupy residues 26-30, 36-40, 57-61, 79-83, 89-93, 99-103, 104-108, 109-113, 114-118, 119-123, 126-130, 136-140, 146-150, 151-155, 156-160, 168-172, 178-182, 188-192, 193-197, 203-207, 225-229, 230-234, 249-253, 256-260, and 267-271. The tract at residues 26–271 is 25 X 5 AA repeats of C-C-X(3); it reads CCEPPCSAPS…SCQSSCCRPA (246 aa).

Belongs to the KRTAP type 10 family. Interacts with hair keratins. In terms of tissue distribution, restricted to a narrow region of the hair fiber cuticle, lying approximately 20 cell layers above the apex of the dermal papilla of the hair root; not detected in any other tissues.

Its function is as follows. In the hair cortex, hair keratin intermediate filaments are embedded in an interfilamentous matrix, consisting of hair keratin-associated proteins (KRTAP), which are essential for the formation of a rigid and resistant hair shaft through their extensive disulfide bond cross-linking with abundant cysteine residues of hair keratins. The matrix proteins include the high-sulfur and high-glycine-tyrosine keratins. This Homo sapiens (Human) protein is Keratin-associated protein 10-11 (KRTAP10-11).